Reading from the N-terminus, the 156-residue chain is Deoxyuridine 5'-triphosphate nucleotidohydrolase (156 aa).

Substrate-binding positions include 76–78 (RSG), Asn89, 93–95 (TVD), and Lys103.

It belongs to the dUTPase family. Mg(2+) serves as cofactor.

The enzyme catalyses dUTP + H2O = dUMP + diphosphate + H(+). It functions in the pathway pyrimidine metabolism; dUMP biosynthesis; dUMP from dCTP (dUTP route): step 2/2. This enzyme is involved in nucleotide metabolism: it produces dUMP, the immediate precursor of thymidine nucleotides and it decreases the intracellular concentration of dUTP so that uracil cannot be incorporated into DNA. The sequence is that of Deoxyuridine 5'-triphosphate nucleotidohydrolase from Rhizobium johnstonii (strain DSM 114642 / LMG 32736 / 3841) (Rhizobium leguminosarum bv. viciae).